The primary structure comprises 510 residues: NAD(P)H-quinone oxidoreductase subunit 2, chloroplastic (510 aa).

12 consecutive transmembrane segments (helical) span residues 24–44 (LLLFHGSFIFPECILIFGLIL), 59–79 (WFYFISSTSLVISITALLFRW), 99–119 (IFQFLILLCSTLCIPLSVEYI), 124–144 (MAITEFLLFVLTATLGGMFLC), 149–169 (LITIFVAPECFSLCSYLLSGY), 183–203 (YLLMGGASSSILVHGFSWLYG), 229–249 (ISIALIFITVGIGFKLSPAPF), 295–315 (WHLLLEILAILSMILGNLIAI), 323–343 (MLAYSSIGQIGYVIIGIIVGD), 354–374 (YMLFYISMNLGTFACIVLFGL), 395–415 (ALSSALCLLSLGGLPPLAGFF), and 418–438 (LYLFWCGWQAGLYFLVSIGLL).

This sequence belongs to the complex I subunit 2 family. In terms of assembly, NDH is composed of at least 16 different subunits, 5 of which are encoded in the nucleus.

It is found in the plastid. It localises to the chloroplast thylakoid membrane. It carries out the reaction a plastoquinone + NADH + (n+1) H(+)(in) = a plastoquinol + NAD(+) + n H(+)(out). The enzyme catalyses a plastoquinone + NADPH + (n+1) H(+)(in) = a plastoquinol + NADP(+) + n H(+)(out). Functionally, NDH shuttles electrons from NAD(P)H:plastoquinone, via FMN and iron-sulfur (Fe-S) centers, to quinones in the photosynthetic chain and possibly in a chloroplast respiratory chain. The immediate electron acceptor for the enzyme in this species is believed to be plastoquinone. Couples the redox reaction to proton translocation, and thus conserves the redox energy in a proton gradient. The protein is NAD(P)H-quinone oxidoreductase subunit 2, chloroplastic of Ananas comosus (Pineapple).